Here is a 412-residue protein sequence, read N- to C-terminus: Proteasome-activating nucleotidase (412 aa).

Positions 15-73 (EDIYQYLLERITNLENRNLELREQFRQMESEKRYVETQKIRYERELRKLKSEIEQLRSP) form a coiled coil. ATP is bound by residues 197–202 (GTGKTL) and His-336. The interval 410–412 (MFA) is docks into pockets in the proteasome alpha-ring to cause gate opening.

This sequence belongs to the AAA ATPase family. As to quaternary structure, homohexamer. The hexameric complex has a two-ring architecture resembling a top hat that caps the 20S proteasome core at one or both ends. Upon ATP-binding, the C-terminus of PAN interacts with the alpha-rings of the proteasome core by binding to the intersubunit pockets.

It localises to the cytoplasm. In terms of biological role, ATPase which is responsible for recognizing, binding, unfolding and translocation of substrate proteins into the archaeal 20S proteasome core particle. Is essential for opening the gate of the 20S proteasome via an interaction with its C-terminus, thereby allowing substrate entry and access to the site of proteolysis. Thus, the C-termini of the proteasomal ATPase function like a 'key in a lock' to induce gate opening and therefore regulate proteolysis. Unfolding activity requires energy from ATP hydrolysis, whereas ATP binding alone promotes ATPase-20S proteasome association which triggers gate opening, and supports translocation of unfolded substrates. The chain is Proteasome-activating nucleotidase from Methanoculleus marisnigri (strain ATCC 35101 / DSM 1498 / JR1).